Consider the following 124-residue polypeptide: UPF0231 protein SO_3983 (124 aa).

This sequence belongs to the UPF0231 family.

The sequence is that of UPF0231 protein SO_3983 from Shewanella oneidensis (strain ATCC 700550 / JCM 31522 / CIP 106686 / LMG 19005 / NCIMB 14063 / MR-1).